We begin with the raw amino-acid sequence, 603 residues long: Protein Spindly (603 aa).

An N-acetylmethionine modification is found at M1. Positions 1–442 (MESDVIADLR…LKLKYEPEEK (442 aa)) form a coiled coil. Phosphoserine occurs at positions 513 and 553. The interval 542-577 (ALSERSRNTPNSPRLAAESRLQREVKQGKETASKLE) is disordered. The segment covering 561 to 577 (RLQREVKQGKETASKLE) has biased composition (basic and acidic residues).

The protein belongs to the Spindly family. In terms of assembly, interacts with KNTC1 and ZW10. These interactions appear weak and may be transient or indirect. Interacts with dynein intermediate chain and dynactin (DCTN1). Interacts with the catalytically active form of USP45. Post-translationally, monoubiquitinated with'Lys-48' linkage. Deubiquitinated by USP45.

It is found in the cytoplasm. The protein localises to the cytoskeleton. The protein resides in the microtubule organizing center. Its subcellular location is the centrosome. It localises to the chromosome. It is found in the centromere. The protein localises to the kinetochore. The protein resides in the nucleus. Its subcellular location is the spindle pole. In terms of biological role, required for the localization of dynein and dynactin to the mitotic kintochore. Dynein is believed to control the initial lateral interaction between the kinetochore and spindle microtubules and to facilitate the subsequent formation of end-on kinetochore-microtubule attachments mediated by the NDC80 complex. Also required for correct spindle orientation. Does not appear to be required for the removal of spindle assembly checkpoint (SAC) proteins from the kinetochore upon bipolar spindle attachment. Acts as an adapter protein linking the dynein motor complex to various cargos and converts dynein from a non-processive to a highly processive motor in the presence of dynactin. Facilitates the interaction between dynein and dynactin and activates dynein processivity (the ability to move along a microtubule for a long distance without falling off the track). Plays a role in cell migration. The chain is Protein Spindly from Bos taurus (Bovine).